The primary structure comprises 87 residues: UPF0147 protein AF_2370.1 (87 aa).

This sequence belongs to the UPF0147 family.

This chain is UPF0147 protein AF_2370.1, found in Archaeoglobus fulgidus (strain ATCC 49558 / DSM 4304 / JCM 9628 / NBRC 100126 / VC-16).